The chain runs to 950 residues: MEEKEQLRRQIRLLQGLIDDYKTLHGNGPALGNSSATRWQPPMFPGGRTFGARYSRPSRRGFSSHHGPSWRKKYSLVNQPVESSDPASDPAFQTSLRSEDSQHPEPQQYVLERQVQLSPDQNMVIKIKPPSKSGAINASGVQRGSLEGCDDPSWSGQRPQGSEVEVPGGQLQPARPGRTKVGYSVDDPLLVCQKEPGKPRVVKSVGRVSDSSPEHRRTVSENEVALRVHFPSVLPHHTAVALGRKVGPHSTSYSEQFIGDQRANTGHSDQPASLGPVVASVRPATARQVREASLLVSCRTSKFRKNNYKWVAASEKSPRVARRALSPRTTLESGNKATLGTVGKTEKPQPKVDPEVRPEKLATPSKPGLSPSKYKWKASSPSASSSSSFRWQSEAGSKDHTSQLSPVPSRPTSGDRPAGGPSSLKPLFGESQLSAYKVKSRTKIIRRRGNTSIPGDKKNSPTTATTSKNHLTQRRRQALRGKNSPVLRKTPHKGLMQVNRHRLCCLPSSRTHLSTKEASSVHMGIPPSNKVIKTRYRIVKKTPSSSFGAPSFPSSLPSWRARRIPLSRSLVLNRLRPAITGGGKAPPGTPRWRNKGYRCIGGVLYKVSANKLSKTSSRPSDGNRTLLRTGRLDPATTCSRSLASRAIQRSLAIIRQAKQKKEKKREYCMYYNRFGRCNRGECCPYIHDPEKVAVCTRFVRGTCKKTDGSCPFSHHVSKEKMPVCSYFLKGICSNSNCPYSHVYVSRKAEVCSDFLKGYCPLGAKCKKKHTLLCPDFARRGICPRGSQCQLLHRNQKRHGRRTAAPPIPGPSDGAPRSKASAGHVLRKPTTTQRSVRQMSSGLASGAEAPASPPPSPRVLASTSTLSSKATAASSPSPSPSTSSPAPSLEQEEAVSGTGSGTGSSGLCKLPSFISLHSSPSPGGQTETGPQAPRSPRTKDSGKPLHIKPRL.

Disordered stretches follow at residues 32 to 106, 127 to 182, 201 to 220, and 314 to 489; these read GNSS…HPEP, IKPP…TKVG, VVKS…RTVS, and SEKS…VLRK. Residues 56–74 show a composition bias toward basic residues; the sequence is RPSRRGFSSHHGPSWRKKY. Polar residues predominate over residues 76-96; sequence LVNQPVESSDPASDPAFQTSL. The segment covering 327-338 has biased composition (polar residues); that stretch reads PRTTLESGNKAT. Over residues 344–360 the composition is skewed to basic and acidic residues; the sequence is KTEKPQPKVDPEVRPEK. A compositionally biased stretch (low complexity) spans 370 to 388; sequence SPSKYKWKASSPSASSSSS. Positions 402 to 412 are enriched in polar residues; sequence SQLSPVPSRPT. S405 carries the post-translational modification Phosphoserine. The segment covering 438–449 has biased composition (basic residues); sequence VKSRTKIIRRRG. A compositionally biased stretch (polar residues) spans 460–470; it reads SPTTATTSKNH. 5 C3H1-type zinc fingers span residues 662–690, 694–717, 718–744, 745–772, and 773–795; these read EKKR…HDPE, VCTR…HHVS, KEKM…HVYV, SRKA…HTLL, and CPDF…HRNQ. The disordered stretch occupies residues 793 to 950; sequence RNQKRHGRRT…GKPLHIKPRL (158 aa). Polar residues predominate over residues 828 to 838; that stretch reads PTTTQRSVRQM. The segment covering 839 to 849 has biased composition (low complexity); sequence SSGLASGAEAP. Phosphoserine is present on residues S851 and S855. A compositionally biased stretch (low complexity) spans 857 to 888; that stretch reads RVLASTSTLSSKATAASSPSPSPSTSSPAPSL. The segment covering 914–928 has biased composition (polar residues); it reads SLHSSPSPGGQTETG. A phosphoserine mark is found at S918, S920, and S934.

Interacts with SMAD1, SMAD3, SMAD4, CPSF2 and CPSF3.

The protein resides in the nucleus. Functionally, required for the export of polyadenylated mRNAs from the nucleus. Enhances ACVR1B-induced SMAD-dependent transcription. Binds to single-stranded DNA but not to double-stranded DNA in vitro. Involved in RNA cleavage. The sequence is that of Zinc finger CCCH domain-containing protein 3 (Zc3h3) from Mus musculus (Mouse).